The chain runs to 319 residues: Probable alcohol dehydrogenase (319 aa).

The Zn(2+) site is built by Cys18, His39, Cys68, Cys71, Cys74, Cys82, and Cys149.

Belongs to the zinc-containing alcohol dehydrogenase family. Requires Zn(2+) as cofactor.

It catalyses the reaction a primary alcohol + NAD(+) = an aldehyde + NADH + H(+). It carries out the reaction a secondary alcohol + NAD(+) = a ketone + NADH + H(+). The chain is Probable alcohol dehydrogenase (terPD) from Pseudomonas sp.